Here is a 161-residue protein sequence, read N- to C-terminus: Regulator of ribonuclease activity A (161 aa).

The protein belongs to the RraA family. As to quaternary structure, homotrimer. Binds to both RNA-binding sites in the C-terminal region of Rne and to RhlB.

The protein localises to the cytoplasm. Its function is as follows. Globally modulates RNA abundance by binding to RNase E (Rne) and regulating its endonucleolytic activity. Can modulate Rne action in a substrate-dependent manner by altering the composition of the degradosome. Modulates RNA-binding and helicase activities of the degradosome. This Shewanella sediminis (strain HAW-EB3) protein is Regulator of ribonuclease activity A.